Here is a 398-residue protein sequence, read N- to C-terminus: Lysophosphatidylserine lipase ABHD12 (398 aa).

Positions 1-15 are enriched in basic and acidic residues; sequence MRKRTEPVTLEHERC. The tract at residues 1-24 is disordered; the sequence is MRKRTEPVTLEHERCAASGSSSSG. The Cytoplasmic segment spans residues 1–74; the sequence is MRKRTEPVTL…RKSLWFRLRK (74 aa). A helical membrane pass occupies residues 75 to 95; it reads ILLCVLGFYIAIPFLVKLCPG. The Extracellular segment spans residues 96-398; the sequence is IQAKLIFLNF…LGKSEPERQH (303 aa). The N-linked (GlcNAc...) asparagine glycan is linked to N123. Catalysis depends on S246, which acts as the Nucleophile. Active-site charge relay system residues include D333 and H372.

This sequence belongs to the serine esterase family. In terms of processing, glycosylated.

The protein resides in the endoplasmic reticulum membrane. It localises to the mitochondrion. It catalyses the reaction 1-(9Z-octadecenoyl)-sn-glycero-3-phospho-L-serine + H2O = sn-glycero-3-phospho-L-serine + (9Z)-octadecenoate + H(+). The enzyme catalyses 1-(9Z-octadecenoyl)-sn-glycero-3-phospho-(1'-sn-glycerol) + H2O = sn-glycero-3-phospho-(1'-sn-glycerol) + (9Z)-octadecenoate + H(+). The catalysed reaction is 1-(9Z-octadecenoyl)-sn-glycero-3-phospho-(1D-myo-inositol) + H2O = sn-glycero-3-phospho-1D-myo-inositol + (9Z)-octadecenoate + H(+). It carries out the reaction 1-(9Z-octadecenoyl)-sn-glycero-3-phosphoethanolamine + H2O = sn-glycero-3-phosphoethanolamine + (9Z)-octadecenoate + H(+). It catalyses the reaction 1-(9Z-octadecenoyl)-sn-glycero-3-phosphocholine + H2O = 1-(9Z-octadecenoyl)-sn-glycerol + phosphocholine + H(+). The enzyme catalyses 2-(9Z-octadecenoyl)-glycerol + H2O = glycerol + (9Z)-octadecenoate + H(+). The catalysed reaction is 1-hexadecanoyl-sn-glycero-3-phospho-L-serine + H2O = sn-glycero-3-phospho-L-serine + hexadecanoate + H(+). It carries out the reaction 2-(5Z,8Z,11Z,14Z-eicosatetraenoyl)-glycerol + H2O = glycerol + (5Z,8Z,11Z,14Z)-eicosatetraenoate + H(+). It catalyses the reaction Hydrolyzes glycerol monoesters of long-chain fatty acids.. The enzyme catalyses 1-decanoylglycerol + H2O = decanoate + glycerol + H(+). The catalysed reaction is 1-dodecanoylglycerol + H2O = dodecanoate + glycerol + H(+). It carries out the reaction 1-tetradecanoylglycerol + H2O = tetradecanoate + glycerol + H(+). It catalyses the reaction 2-hexadecanoylglycerol + H2O = glycerol + hexadecanoate + H(+). The enzyme catalyses 1-(9Z-octadecenoyl)-glycerol + H2O = glycerol + (9Z)-octadecenoate + H(+). The catalysed reaction is 2-(9Z,12Z-octadecadienoyl)-glycerol + H2O = (9Z,12Z)-octadecadienoate + glycerol + H(+). It carries out the reaction 1-(5Z,8Z,11Z,14Z-eicosatetraenoyl)-glycerol + H2O = glycerol + (5Z,8Z,11Z,14Z)-eicosatetraenoate + H(+). It catalyses the reaction 1-(9Z,12Z-octadecadienoyl)-glycerol + H2O = (9Z,12Z)-octadecadienoate + glycerol + H(+). The enzyme catalyses 1-hexadecanoylglycerol + H2O = glycerol + hexadecanoate + H(+). The catalysed reaction is 1-octadecanoylglycerol + H2O = octadecanoate + glycerol + H(+). It carries out the reaction 1-octadecanoyl-2-(9,10-epoxyoctadecanoyl)-sn-glycero-3-phospho-L-serine + H2O = 9,10-epoxyoctadecanoate + 1-octadecanoyl-sn-glycero-3-phosphoserine + H(+). It catalyses the reaction 1-octadecanoyl-2-(10-hydroxyoctadecanoyl)-sn-glycero-3-phospho-L-serine + H2O = 1-octadecanoyl-sn-glycero-3-phosphoserine + 10-hydroxyoctadecanoate + H(+). The enzyme catalyses 1-hexadecanoyl-2-(10-hydroxyoctadecanoyl)-sn-glycero-3-phospho-L-serine + H2O = 10-hydroxyoctadecanoate + 1-hexadecanoyl-sn-glycero-3-phospho-L-serine + H(+). Selectively inhibited by DO264 (N-3-pyridyl-N'-(1-[3-chloro-4-{2-chloro-4-(trifluoromethoxy)phenoxy}pyridine-2-yl]piperidin-4-yl)thiourea). In terms of biological role, lysophosphatidylserine (LPS) lipase that mediates the hydrolysis of lysophosphatidylserine, a class of signaling lipids that regulates immunological and neurological processes. Represents a major lysophosphatidylserine lipase in the brain, thereby playing a key role in the central nervous system. Also able to hydrolyze oxidized phosphatidylserine; oxidized phosphatidylserine is produced in response to severe inflammatory stress and constitutes a proapoptotic 'eat me' signal. Also has monoacylglycerol (MAG) lipase activity: hydrolyzes 2-arachidonoylglycerol (2-AG), thereby acting as a regulator of endocannabinoid signaling pathways. Has a strong preference for very-long-chain lipid substrates; substrate specificity is likely due to improved catalysis and not improved substrate binding. This is Lysophosphatidylserine lipase ABHD12 from Mus musculus (Mouse).